A 407-amino-acid polypeptide reads, in one-letter code: Enolase-binding protein (407 aa).

The signal sequence occupies residues 1–24 (MALGNALYPLTATVFLCVVGFATS). Residues 25-366 (SNENSRFLIN…FGQAYPGFRN (342 aa)) lie on the Extracellular side of the membrane. N-linked (GlcNAc...) asparagine glycosylation is found at Asn52, Asn78, Asn161, and Asn250. Residues 367 to 387 (VAIGAAILFFSVLGVAIIDMI) traverse the membrane as a helical segment. At 388–407 (RRTIANRRAKRLHLGKYSRT) the chain is on the cytoplasmic side.

In terms of assembly, (Microbial infection) Interacts with ENO/enolase from parasites P.berghei and P.falciparum. As to expression, expressed in the female midgut epithelium.

The protein resides in the cell membrane. In terms of biological role, (Microbial infection) Acts as a receptor for ENO/enolase from parasites P.berghei and P.falciparum. The interaction is involved in the invasion of the mosquito midgut by P.berghei ookinete, but is dispensable for P.falciparum ookinete invasion. This Anopheles gambiae (African malaria mosquito) protein is Enolase-binding protein.